Here is a 534-residue protein sequence, read N- to C-terminus: MKKKISQAIIKFFKNENLIIDESKLIIEKSKNFGDYSSNVALMFAKQNKIDSLKLAQTIKNQLLSENLNLEKIEIAPPGFINFFISKNEYANIVSEIIQKGENFGRYSLQKKINLEFVSANPTGFLHLGHLRGAVIGDILANILEFSGNFVFREYYINDFGSQIDRLVSSVFSRYQQIFKKFALPEEAYLGEDIIWCAQKFFQIYANKFENSSLDDLETYKIFREKSIEIFLDEIKADLANLSIKFDVFSSESELFRTEKVQKNLANLPFVYKKEEAIWLKTSKFGDQKDRVLVKKNGEFTYFSSDIAYHFEKINSNFKPDFLINIWGADHIGYVDRMKAALKTVNLNQKLDILLYQLVKLFKNGQEFKMSKRMGKTFTIKDLLELVDQDAIRYFISERSYNSLVEFDIGLAAKISLQNPLFLIQYAHARASKLLANSTIVPEKILKFEAENETILISKLKQFEEIVLKITKNYKINLLNKYLLELANLFNSFYSNSKIIGNQNQNSLLSLTKAVQIVLKNGLKLLGIKAKERI.

A 'HIGH' region motif is present at residues 120–130 (ANPTGFLHLGH).

Belongs to the class-I aminoacyl-tRNA synthetase family. Monomer.

It localises to the cytoplasm. It catalyses the reaction tRNA(Arg) + L-arginine + ATP = L-arginyl-tRNA(Arg) + AMP + diphosphate. This chain is Arginine--tRNA ligase, found in Mesomycoplasma hyopneumoniae (strain 7448) (Mycoplasma hyopneumoniae).